A 171-amino-acid polypeptide reads, in one-letter code: KRAB domain-containing protein 4 (171 aa).

The KRAB domain maps to 8–79 (LTFKDVFVDF…DGGTPVRTCA (72 aa)).

As to expression, expressed in brain, ovary, testis, prostate, tonsil, heart, bone marrow, colon, breast and kidney.

The chain is KRAB domain-containing protein 4 (KRBOX4) from Homo sapiens (Human).